We begin with the raw amino-acid sequence, 202 residues long: Adenylyl-sulfate kinase (202 aa).

Residue G35–S42 participates in ATP binding. S109 (phosphoserine intermediate) is an active-site residue.

The protein belongs to the APS kinase family.

It catalyses the reaction adenosine 5'-phosphosulfate + ATP = 3'-phosphoadenylyl sulfate + ADP + H(+). The protein operates within sulfur metabolism; hydrogen sulfide biosynthesis; sulfite from sulfate: step 2/3. Catalyzes the synthesis of activated sulfate. This chain is Adenylyl-sulfate kinase, found in Bacteroides fragilis (strain ATCC 25285 / DSM 2151 / CCUG 4856 / JCM 11019 / LMG 10263 / NCTC 9343 / Onslow / VPI 2553 / EN-2).